The primary structure comprises 734 residues: ATP-dependent RNA helicase DDX50 (734 aa).

The segment at 1–131 is disordered; sequence MPGKLLWGDI…KAEETLTREQ (131 aa). Residues 11-20 show a composition bias toward acidic residues; it reads MELEAPLEES. Basic and acidic residues-rich tracts occupy residues 38 to 51 and 67 to 86; these read HSES…RENG and REKL…EFSP. Ser-41, Ser-81, Ser-85, Ser-113, Ser-119, and Ser-120 each carry phosphoserine. The segment covering 115-131 has biased composition (basic and acidic residues); the sequence is NSHKSSDKAEETLTREQ. A Glycyl lysine isopeptide (Lys-Gly) (interchain with G-Cter in SUMO2) cross-link involves residue Lys-122. Residues 134–162 carry the Q motif motif; it reads GAFSNFSISEETIKLLKGRGVTYLFPIQV. One can recognise a Helicase ATP-binding domain in the interval 165–344; sequence FGPVYEGKDL…KKYMKSRYEQ (180 aa). 178–185 provides a ligand contact to ATP; the sequence is ARTGTGKT. Phosphothreonine is present on Thr-244. The DEVD box signature appears at 287–290; it reads DEVD. One can recognise a Helicase C-terminal domain in the interval 377–521; that stretch reads DVLQVYSGSE…GVPSTMDLVK (145 aa). Phosphoserine is present on Ser-515. Residues 664–734 form a disordered region; it reads YYDGNTSSNP…RSGGHKRNFD (71 aa). Residues 679 to 698 show a composition bias toward gly residues; that stretch reads WSGGRSGRSGRSGGRSGGRS. Residues 699-709 are compositionally biased toward low complexity; the sequence is GRQSRQGSRSG. Positions 717–734 are enriched in basic residues; that stretch reads RSGNRNRSRSGGHKRNFD.

Belongs to the DEAD box helicase family. DDX21/DDX50 subfamily. In terms of assembly, interacts with C1QBP. Interacts with the ubiquitin ligase CTLH complex through GID4. Interacts with TICAM1.

The protein localises to the nucleus. It localises to the nucleolus. The protein resides in the cytoplasm. The catalysed reaction is ATP + H2O = ADP + phosphate + H(+). Functionally, ATP-dependent RNA helicase that may play a role in various aspects of RNA metabolism including pre-mRNA splicing or ribosomal RNA production. Also acts as a viral restriction factor and promotes the activation of the NF-kappa-B and IRF3 signaling pathways following its stimulation with viral RNA or infection with RNA and DNA viruses. For instance, decreases vaccinia virus, herpes simplex virus, Zika virus or dengue virus replication during the early stage of infection. Mechanistically, acts via the adapter TICAM1 and independently of the DDX1-DDX21-DHX36 helicase complex to induce the production of interferon-beta. This chain is ATP-dependent RNA helicase DDX50 (Ddx50), found in Mus musculus (Mouse).